The primary structure comprises 342 residues: Epoxide hydrolase srdG (342 aa).

In terms of domain architecture, AB hydrolase-1 spans Ala-44–Lys-332. Asp-122 acts as the Nucleophile in catalysis. His-320 functions as the Proton acceptor in the catalytic mechanism.

Belongs to the AB hydrolase superfamily. Epoxide hydrolase family.

Highly reducing polyketide synthase; part of the gene cluster that mediates the biosynthesis of sordarial, a salicylic aldehyde structurally related to the phytotoxin pyriculol. The most interesting aspect of this pathway is formation of an aromatic product from the highly reducing polyketide synthase srdA. SrdA synthesizes a reduced polyketide chain from one molecule of acetyl-CoA and five molecules of malonyl-CoA. The polyketide chain is then reductively released as an aldehyde. The oxidoreductases srdC, srdD and srdE then oxidize one of the hydroxy groups to facilitate the intramolecular aldol condensation, followed by dehydration to yield a salicylic aldehyde. This aldehyde can undergo facile reduction by endogenous reductases to yield the alcohol 1-hydroxy-2-hydroxymethyl-3-pent-1,3-dienylbenzene. The flavin-dependent srdI counteract against the propensity of the aldehydes to be reduced under physiological conditions and is responsible for reoxidizing 1-hydroxy-2-hydroxymethyl-3-pent-1,3-dienylbenzene back to the salicylic aldehyde. This salicylic aldehyde is then selectively epoxidized by the cupin-domain-containing oxidoreductase srdB to yield the epoxide, which can be hydrolyzed stereoselectively by the hydrolase srdG to give the final product sordarial. The sequence is that of Epoxide hydrolase srdG from Neurospora crassa (strain ATCC 24698 / 74-OR23-1A / CBS 708.71 / DSM 1257 / FGSC 987).